The chain runs to 1448 residues: DNA-directed RNA polymerase subunit beta' (1448 aa).

Residues Cys66, Cys68, Cys81, and Cys84 each contribute to the Zn(2+) site. Residues Asp474, Asp476, and Asp478 each coordinate Mg(2+). Zn(2+) is bound by residues Cys814, Cys888, Cys895, and Cys898. Residues 1408 to 1448 (LEELQAAIGGDGESPSGDGAAGDGAPSEEDVEQIEASGSEN) form a disordered region.

The protein belongs to the RNA polymerase beta' chain family. The RNAP catalytic core consists of 2 alpha, 1 beta, 1 beta' and 1 omega subunit. When a sigma factor is associated with the core the holoenzyme is formed, which can initiate transcription. Requires Mg(2+) as cofactor. The cofactor is Zn(2+).

It carries out the reaction RNA(n) + a ribonucleoside 5'-triphosphate = RNA(n+1) + diphosphate. In terms of biological role, DNA-dependent RNA polymerase catalyzes the transcription of DNA into RNA using the four ribonucleoside triphosphates as substrates. The polypeptide is DNA-directed RNA polymerase subunit beta' (Salinibacter ruber (strain DSM 13855 / M31)).